The following is a 417-amino-acid chain: MLEQMGIAAKQASYKLAQLSSREKNRVLEKIADELEAQSEIILNANAQDVADARANGLSEAMLDRLALTPARLKGIADDVRQVCNLADPVGQVIDGGVLDSGLRLERRRVPLGVIGVIYEARPNVTVDVASLCLKTGNAVILRGGKETCRTNAATVVVIQDALKSCGLPAGAVQAIDNPDRALVSEMLRMDKYIDMLIPRGGAGLHKLCREQSTIPVITGGIGVCHIYVDESAEIAEALKVIVNAKTQRPSTCNTVETLLVNKNIAYSFLPALSKQMAESGVTLHADASALAQLQTGPAKVVAVKAEEYDDEFLSLDLNVKIVSDLDDAIAHIREHGTQHSDAILTRDMRNAQRFVNEVDSSAVYVNASTRFTDGGQFGLGAEVAVSTQKLHARGPMGLEALTTYKWIGIGDYTIRA.

It belongs to the gamma-glutamyl phosphate reductase family.

The protein localises to the cytoplasm. It carries out the reaction L-glutamate 5-semialdehyde + phosphate + NADP(+) = L-glutamyl 5-phosphate + NADPH + H(+). Its pathway is amino-acid biosynthesis; L-proline biosynthesis; L-glutamate 5-semialdehyde from L-glutamate: step 2/2. Functionally, catalyzes the NADPH-dependent reduction of L-glutamate 5-phosphate into L-glutamate 5-semialdehyde and phosphate. The product spontaneously undergoes cyclization to form 1-pyrroline-5-carboxylate. In Escherichia coli O157:H7, this protein is Gamma-glutamyl phosphate reductase.